Consider the following 376-residue polypeptide: MVPGIHRPAVVKVNLGAIKRNIENEMQHLEPGQKMLAVVKANGYGHGAVEVAKVADQIGAAGFCVAILDEALELRRADITKTILVLGVVSPEYAPIAAANDISLTVPNLEWLKEAEKYLENSDLQLKIHLGIDSGMGRIGFNEDKDFIAANKFLENNDNFYIEGMFAHFASADSSDETYFKHQCEKFNHMKSLLTVKPKWIHVDNTAASIFHNGIKSDLVRFGIGIYGLNPSSNPNSPDLKSKIALDPALSFESELTHVKTIHQGDGVGYGSTFVADKDTIIGTVPVGYADGFIRKFQGFKVKVGNTYCPIVGRICMDQFMVEMPKEMPLGTKVVIISDNPDDLNNIKAAADYVDTIHYEVACLLNDRLPRVYYED.

The active-site Proton acceptor; specific for D-alanine is lysine 40. Lysine 40 is modified (N6-(pyridoxal phosphate)lysine). Arginine 138 provides a ligand contact to substrate. The Proton acceptor; specific for L-alanine role is filled by tyrosine 270. Methionine 317 contributes to the substrate binding site.

This sequence belongs to the alanine racemase family. The cofactor is pyridoxal 5'-phosphate.

It carries out the reaction L-alanine = D-alanine. The protein operates within amino-acid biosynthesis; D-alanine biosynthesis; D-alanine from L-alanine: step 1/1. Catalyzes the interconversion of L-alanine and D-alanine. May also act on other amino acids. The chain is Alanine racemase (alr) from Lactobacillus gasseri (strain ATCC 33323 / DSM 20243 / BCRC 14619 / CIP 102991 / JCM 1131 / KCTC 3163 / NCIMB 11718 / NCTC 13722 / AM63).